The sequence spans 662 residues: Bifunctional polymyxin resistance protein ArnA (662 aa).

Residues 1–307 (MTSKAVVFAY…ELGLVEGARL (307 aa)) form a formyltransferase ArnAFT region. His106 serves as the catalytic Proton donor; for formyltransferase activity. (6R)-10-formyltetrahydrofolate-binding positions include Arg116 and 138 to 142 (VERAD). A dehydrogenase ArnADH region spans residues 316-662 (RRTRVLILGV…EALREREAQA (347 aa)). Residues Asp349 and 370–371 (DI) each bind NAD(+). Residues Ala395, Tyr400, and 434 to 435 (TS) each bind UDP-alpha-D-glucuronate. Glu436 serves as the catalytic Proton acceptor; for decarboxylase activity. UDP-alpha-D-glucuronate contacts are provided by residues Arg462, Asn493, 527–536 (RLVDGGAQKR), and Tyr614. Arg620 serves as the catalytic Proton donor; for decarboxylase activity.

In the N-terminal section; belongs to the Fmt family. UDP-L-Ara4N formyltransferase subfamily. It in the C-terminal section; belongs to the NAD(P)-dependent epimerase/dehydratase family. UDP-glucuronic acid decarboxylase subfamily. Homohexamer, formed by a dimer of trimers.

The enzyme catalyses UDP-alpha-D-glucuronate + NAD(+) = UDP-beta-L-threo-pentopyranos-4-ulose + CO2 + NADH. The catalysed reaction is UDP-4-amino-4-deoxy-beta-L-arabinose + (6R)-10-formyltetrahydrofolate = UDP-4-deoxy-4-formamido-beta-L-arabinose + (6S)-5,6,7,8-tetrahydrofolate + H(+). The protein operates within nucleotide-sugar biosynthesis; UDP-4-deoxy-4-formamido-beta-L-arabinose biosynthesis; UDP-4-deoxy-4-formamido-beta-L-arabinose from UDP-alpha-D-glucuronate: step 1/3. It participates in nucleotide-sugar biosynthesis; UDP-4-deoxy-4-formamido-beta-L-arabinose biosynthesis; UDP-4-deoxy-4-formamido-beta-L-arabinose from UDP-alpha-D-glucuronate: step 3/3. Its pathway is bacterial outer membrane biogenesis; lipopolysaccharide biosynthesis. Its function is as follows. Bifunctional enzyme that catalyzes the oxidative decarboxylation of UDP-glucuronic acid (UDP-GlcUA) to UDP-4-keto-arabinose (UDP-Ara4O) and the addition of a formyl group to UDP-4-amino-4-deoxy-L-arabinose (UDP-L-Ara4N) to form UDP-L-4-formamido-arabinose (UDP-L-Ara4FN). The modified arabinose is attached to lipid A and is required for resistance to polymyxin and cationic antimicrobial peptides. The protein is Bifunctional polymyxin resistance protein ArnA of Pseudomonas paraeruginosa (strain DSM 24068 / PA7) (Pseudomonas aeruginosa (strain PA7)).